The chain runs to 455 residues: Adhesin YadA (455 aa).

Residues 1–25 (MTKDFKISVSAALISALFSSPYAFA) form the signal peptide. A surface exposed passenger domain region spans residues 26–363 (DDYDGIPNLT…KKAIRESNQY (338 aa)). Residues 209–243 (VNVAQLKKEIEKTQENTNKRSAELLANANAYADNK) adopt a coiled-coil conformation. Residues 364-402 (TDHKFRQLDNRLDKLDTRVDKGLASSAALNSLFQPYGVG) form an outer membrane translocation of the passenger domain region. The next 4 membrane-spanning stretches (beta stranded) occupy residues 402–412 (GKVNFTAGVGG), 416–427 (SQALAIGSGYRV), 434–440 (KAGVAYA), and 444–455 (DVMYNASFNIEW). The interval 403–455 (KVNFTAGVGGYRSSQALAIGSGYRVNENVALKAGVAYAGSSDVMYNASFNIEW) is translocator domain.

It belongs to the autotransporter-2 (AT-2) (TC 1.B.40) family. As to quaternary structure, homotrimer; in gels migrates as monomers, dimers and homotrimers. Does not form trimers with distantly related EibA from E.coli; coexpression was lethal and one of the genes is eliminated in vivo. If the full translocator domain (368-455) is exchanged with that of EibA ('299-392'), will form heterotrimers with EibA and vice-versa.

The protein resides in the cell surface. It is found in the cell outer membrane. Functionally, collagen-binding outer membrane protein forming a fibrillar matrix on the bacterial cell surface. Promotes initial attachment and invasion of eukaryotic cells. Also protects the bacteria by being responsible for agglutination, serum resistance, complement inactivation and phagocytosis resistance. This is Adhesin YadA (yadA) from Yersinia enterocolitica.